Reading from the N-terminus, the 332-residue chain is Small ribosomal subunit protein uS2 (332 aa).

The protein belongs to the universal ribosomal protein uS2 family.

In Nitrobacter hamburgensis (strain DSM 10229 / NCIMB 13809 / X14), this protein is Small ribosomal subunit protein uS2.